A 456-amino-acid chain; its full sequence is Phosphomannomutase (456 aa).

Catalysis depends on serine 98, which acts as the Phosphoserine intermediate. Residues serine 98, aspartate 246, aspartate 248, and aspartate 250 each coordinate Mg(2+).

It belongs to the phosphohexose mutase family. Mg(2+) serves as cofactor.

The enzyme catalyses alpha-D-mannose 1-phosphate = D-mannose 6-phosphate. It functions in the pathway nucleotide-sugar biosynthesis; GDP-alpha-D-mannose biosynthesis; alpha-D-mannose 1-phosphate from D-fructose 6-phosphate: step 2/2. The protein operates within bacterial outer membrane biogenesis; LPS O-antigen biosynthesis. In terms of biological role, involved in GDP-mannose biosynthesis which serves as the activated sugar nucleotide precursor for mannose residues in cell surface polysaccharides. This enzyme participates in synthesis of the LPS O9 antigen. The protein is Phosphomannomutase (manB) of Escherichia coli.